We begin with the raw amino-acid sequence, 364 residues long: UDP-arabinopyranose mutase 1 (364 aa).

The DXD motif signature appears at 110 to 112; the sequence is DDD. N-linked (Glc...) arginine glycosylation occurs at R158.

It belongs to the RGP family. Heteromers with UAM2 and UAM3. Requires Mn(2+) as cofactor. Mg(2+) serves as cofactor. Post-translationally, reversibly glycosylated in vitro at Arg-158 by UDP-glucose. Reversibly glycosylated by UDP-xylose and UDP-galactose.

The protein resides in the golgi apparatus. It carries out the reaction UDP-beta-L-arabinofuranose = UDP-beta-L-arabinopyranose. Its function is as follows. UDP-L-arabinose mutase involved in the biosynthesis of cell wall non-cellulosic polysaccharides. Catalyzes the interconvertion of UDP-L-arabinopyranose (UDP-Arap) and UDP-L-arabinofuranose (UDP-Araf). Preferentially catalyzes the formation of UDP-Arap from UDP-Araf. At thermodynamic equilibrium in vitro the ratio of the pyranose form over the furanose form is 90:10. Is probably active as heteromer in vivo. The polypeptide is UDP-arabinopyranose mutase 1 (Oryza sativa subsp. japonica (Rice)).